Here is a 446-residue protein sequence, read N- to C-terminus: Sterile alpha motif domain-containing protein 7 (446 aa).

Residues 94–168 (HTARTEMEMY…NLQGNPMLAA (75 aa)) form a required for localization to nuclear polycomb bodies region. 2 disordered regions span residues 187 to 207 (NTGN…QAEE) and 225 to 277 (KDPD…AWDD). Polar residues predominate over residues 232-249 (PSNQKSSETNEKPTTALA). Residues 327–392 (WTVDDVHSFI…SQVSQHVGSM (66 aa)) form the SAM domain.

In terms of assembly, monomer, homodimer and homooligomer. Component of a Polycomb group (PcG) multiprotein PRC1-like complex. Interacts with PHC2, NR2E3 and SAMD11. Interacts with RNF1 in a PHC2-dependent manner. In terms of tissue distribution, expressed in the retina (at protein level). Expressed in the retinal inner and outer nuclear layers.

It is found in the nucleus. The protein resides in the cytoplasm. Component of a Polycomb group (PcG) multiprotein PRC1-like complex, essential for establishing rod photoreceptor cell identity and function by silencing nonrod gene expression in developing rod photoreceptor cells. Via its association with the PRC1-like complex, promotes epigenetic repressive marks H3K27me3 and H2AK119ub marks in nonrod genes, silencing their transcription. Represses Crx-controlled photoreceptor-specific gene expression. The protein is Sterile alpha motif domain-containing protein 7 (SAMD7) of Homo sapiens (Human).